A 680-amino-acid polypeptide reads, in one-letter code: tRNA 5-methylaminomethyl-2-thiouridine biosynthesis bifunctional protein MnmC (680 aa).

The tRNA (mnm(5)s(2)U34)-methyltransferase stretch occupies residues 1–245 (MSHPPIQTAT…KREMLTGILP (245 aa)). The tract at residues 270-680 (IGGGIVSALT…PVQQRVSVLS (411 aa)) is FAD-dependent cmnm(5)s(2)U34 oxidoreductase.

In the N-terminal section; belongs to the methyltransferase superfamily. tRNA (mnm(5)s(2)U34)-methyltransferase family. It in the C-terminal section; belongs to the DAO family. It depends on FAD as a cofactor.

It localises to the cytoplasm. It catalyses the reaction 5-aminomethyl-2-thiouridine(34) in tRNA + S-adenosyl-L-methionine = 5-methylaminomethyl-2-thiouridine(34) in tRNA + S-adenosyl-L-homocysteine + H(+). Its function is as follows. Catalyzes the last two steps in the biosynthesis of 5-methylaminomethyl-2-thiouridine (mnm(5)s(2)U) at the wobble position (U34) in tRNA. Catalyzes the FAD-dependent demodification of cmnm(5)s(2)U34 to nm(5)s(2)U34, followed by the transfer of a methyl group from S-adenosyl-L-methionine to nm(5)s(2)U34, to form mnm(5)s(2)U34. The protein is tRNA 5-methylaminomethyl-2-thiouridine biosynthesis bifunctional protein MnmC of Yersinia enterocolitica serotype O:8 / biotype 1B (strain NCTC 13174 / 8081).